The chain runs to 344 residues: Holliday junction branch migration complex subunit RuvB (344 aa).

The segment at 4–194 (CLLRFCYNSL…FGITGHMEYY (191 aa)) is large ATPase domain (RuvB-L). Residues leucine 33, arginine 34, glycine 75, lysine 78, threonine 79, threonine 80, 141-143 (EDF), arginine 184, tyrosine 194, and arginine 231 each bind ATP. Threonine 79 contacts Mg(2+). The small ATPAse domain (RuvB-S) stretch occupies residues 195–265 (TDIDLTEIVE…ITDKALTMLD (71 aa)). The segment at 268–344 (HEGLDYVDQK…YEHLGYRYTE (77 aa)) is head domain (RuvB-H). DNA contacts are provided by arginine 304, arginine 323, arginine 325, and arginine 328.

Belongs to the RuvB family. In terms of assembly, homohexamer. Forms an RuvA(8)-RuvB(12)-Holliday junction (HJ) complex. HJ DNA is sandwiched between 2 RuvA tetramers; dsDNA enters through RuvA and exits via RuvB. An RuvB hexamer assembles on each DNA strand where it exits the tetramer. Each RuvB hexamer is contacted by two RuvA subunits (via domain III) on 2 adjacent RuvB subunits; this complex drives branch migration. In the full resolvosome a probable DNA-RuvA(4)-RuvB(12)-RuvC(2) complex forms which resolves the HJ.

Its subcellular location is the cytoplasm. It carries out the reaction ATP + H2O = ADP + phosphate + H(+). In terms of biological role, the RuvA-RuvB-RuvC complex processes Holliday junction (HJ) DNA during genetic recombination and DNA repair, while the RuvA-RuvB complex plays an important role in the rescue of blocked DNA replication forks via replication fork reversal (RFR). RuvA specifically binds to HJ cruciform DNA, conferring on it an open structure. The RuvB hexamer acts as an ATP-dependent pump, pulling dsDNA into and through the RuvAB complex. RuvB forms 2 homohexamers on either side of HJ DNA bound by 1 or 2 RuvA tetramers; 4 subunits per hexamer contact DNA at a time. Coordinated motions by a converter formed by DNA-disengaged RuvB subunits stimulates ATP hydrolysis and nucleotide exchange. Immobilization of the converter enables RuvB to convert the ATP-contained energy into a lever motion, pulling 2 nucleotides of DNA out of the RuvA tetramer per ATP hydrolyzed, thus driving DNA branch migration. The RuvB motors rotate together with the DNA substrate, which together with the progressing nucleotide cycle form the mechanistic basis for DNA recombination by continuous HJ branch migration. Branch migration allows RuvC to scan DNA until it finds its consensus sequence, where it cleaves and resolves cruciform DNA. This chain is Holliday junction branch migration complex subunit RuvB, found in Streptococcus mutans serotype c (strain ATCC 700610 / UA159).